The chain runs to 310 residues: Glycerol-3-phosphate dehydrogenase [NAD(P)+] (310 aa).

NADPH-binding residues include Trp-19, Arg-39, Arg-40, and Lys-87. Sn-glycerol 3-phosphate contacts are provided by Lys-87 and Gly-115. Ser-119 contacts NADPH. The sn-glycerol 3-phosphate site is built by Lys-170, Asp-223, Ser-233, Arg-234, and Asn-235. The Proton acceptor role is filled by Lys-170. Arg-234 contributes to the NADPH binding site. Glu-260 serves as a coordination point for NADPH.

Belongs to the NAD-dependent glycerol-3-phosphate dehydrogenase family.

It is found in the cytoplasm. The enzyme catalyses sn-glycerol 3-phosphate + NAD(+) = dihydroxyacetone phosphate + NADH + H(+). It carries out the reaction sn-glycerol 3-phosphate + NADP(+) = dihydroxyacetone phosphate + NADPH + H(+). The protein operates within membrane lipid metabolism; glycerophospholipid metabolism. Functionally, catalyzes the reduction of the glycolytic intermediate dihydroxyacetone phosphate (DHAP) to sn-glycerol 3-phosphate (G3P), the key precursor for phospholipid synthesis. In Synechococcus sp. (strain JA-3-3Ab) (Cyanobacteria bacterium Yellowstone A-Prime), this protein is Glycerol-3-phosphate dehydrogenase [NAD(P)+].